Consider the following 202-residue polypeptide: Acireductone dioxygenase (202 aa).

Residues His110, His112, Glu116, and His154 each coordinate Fe(2+). The Ni(2+) site is built by His110, His112, Glu116, and His154.

The protein belongs to the acireductone dioxygenase (ARD) family. As to quaternary structure, monomer. It depends on Fe(2+) as a cofactor. The cofactor is Ni(2+).

It carries out the reaction 1,2-dihydroxy-5-(methylsulfanyl)pent-1-en-3-one + O2 = 3-(methylsulfanyl)propanoate + CO + formate + 2 H(+). The enzyme catalyses 1,2-dihydroxy-5-(methylsulfanyl)pent-1-en-3-one + O2 = 4-methylsulfanyl-2-oxobutanoate + formate + 2 H(+). It functions in the pathway amino-acid biosynthesis; L-methionine biosynthesis via salvage pathway; L-methionine from S-methyl-5-thio-alpha-D-ribose 1-phosphate: step 5/6. Its function is as follows. Catalyzes 2 different reactions between oxygen and the acireductone 1,2-dihydroxy-3-keto-5-methylthiopentene (DHK-MTPene) depending upon the metal bound in the active site. Fe-containing acireductone dioxygenase (Fe-ARD) produces formate and 2-keto-4-methylthiobutyrate (KMTB), the alpha-ketoacid precursor of methionine in the methionine recycle pathway. Ni-containing acireductone dioxygenase (Ni-ARD) produces methylthiopropionate, carbon monoxide and formate, and does not lie on the methionine recycle pathway. The sequence is that of Acireductone dioxygenase from Synechococcus sp. (strain CC9311).